A 52-amino-acid chain; its full sequence is Alpha-crystallin B chain (52 aa).

This sequence belongs to the small heat shock protein (HSP20) family. In terms of assembly, homodimer. Aggregates with homologous proteins, including alpha-A-crystallin and the small heat shock protein HSPB1, to form large heteromeric complexes.

In terms of biological role, may contribute to the transparency and refractive index of the lens. The sequence is that of Alpha-crystallin B chain (CRYAB) from Turdus merula (Common blackbird).